Consider the following 376-residue polypeptide: Protein STRICTOSIDINE SYNTHASE-LIKE 8 (376 aa).

The first 31 residues, 1–31 (MPISRRVLTPITAAPVILAVLCFFFWSSIIG), serve as a signal peptide directing secretion. N-linked (GlcNAc...) asparagine glycosylation is found at N98, N172, and N224.

It belongs to the strictosidine synthase family.

The protein resides in the vacuole. This Arabidopsis thaliana (Mouse-ear cress) protein is Protein STRICTOSIDINE SYNTHASE-LIKE 8.